Here is a 469-residue protein sequence, read N- to C-terminus: Serine hydroxymethyltransferase, cytosolic (469 aa).

Lysine 248 carries the N6-(pyridoxal phosphate)lysine modification.

Belongs to the SHMT family. As to quaternary structure, homotetramer. The cofactor is pyridoxal 5'-phosphate.

It localises to the cytoplasm. The catalysed reaction is (6R)-5,10-methylene-5,6,7,8-tetrahydrofolate + glycine + H2O = (6S)-5,6,7,8-tetrahydrofolate + L-serine. It functions in the pathway one-carbon metabolism; tetrahydrofolate interconversion. Interconversion of serine and glycine. In Candida glabrata (strain ATCC 2001 / BCRC 20586 / JCM 3761 / NBRC 0622 / NRRL Y-65 / CBS 138) (Yeast), this protein is Serine hydroxymethyltransferase, cytosolic (SHM2).